The chain runs to 976 residues: Mast/stem cell growth factor receptor Kit (976 aa).

The first 25 residues, 1-25 (MRGARGAWDFLCVLLLLLRVQTGSS), serve as a signal peptide directing secretion. Over 26–524 (QPSVSPGEPS…QIHPHTLFTP (499 aa)) the chain is Extracellular. Ig-like C2-type domains lie at 27–112 (PSVS…VFVR), 121–205 (DRSL…LKVR), 212–308 (PVVS…LEVV), 317–410 (PMIN…VYVN), and 413–507 (PEIL…FNFA). A disulfide bridge connects residues cysteine 58 and cysteine 97. 2 N-linked (GlcNAc...) asparagine glycosylation sites follow: asparagine 130 and asparagine 145. Cystine bridges form between cysteine 136-cysteine 186, cysteine 151-cysteine 183, and cysteine 233-cysteine 290. 8 N-linked (GlcNAc...) asparagine glycosylation sites follow: asparagine 283, asparagine 293, asparagine 300, asparagine 320, asparagine 352, asparagine 367, asparagine 463, and asparagine 486. Cysteine 428 and cysteine 491 form a disulfide bridge. Residues 525-545 (LLIGFVIVAGMMCIIVMILTY) form a helical membrane-spanning segment. Residues 546 to 976 (KYLQKPMYEV…SQPLLVHDDV (431 aa)) lie on the Cytoplasmic side of the membrane. Tyrosine 547, tyrosine 553, tyrosine 568, and tyrosine 570 each carry phosphotyrosine; by autocatalysis. Tyrosine 568 contacts Mg(2+). Residues 568–570 (YVY) form an important for interaction with phosphotyrosine-binding proteins region. Residues 589–937 (LSFGKTLGAG…ISESTNHIYS (349 aa)) form the Protein kinase domain. Residues 596-603 (GAGAFGKV), lysine 623, and 671-677 (EYCCYGD) contribute to the ATP site. Tyrosine 703, tyrosine 721, and tyrosine 730 each carry phosphotyrosine; by autocatalysis. Serine 741 and serine 746 each carry phosphoserine; by PKC/PRKCA. The active-site Proton acceptor is the aspartate 792. Arginine 796 contributes to the ATP binding site. Positions 797 and 810 each coordinate Mg(2+). Position 821 is a phosphoserine (serine 821). Tyrosine 823 carries the post-translational modification Phosphotyrosine; by autocatalysis. Serine 891 carries the post-translational modification Phosphoserine. A phosphotyrosine; by autocatalysis mark is found at tyrosine 900 and tyrosine 936. Residue serine 959 is modified to Phosphoserine.

It belongs to the protein kinase superfamily. Tyr protein kinase family. CSF-1/PDGF receptor subfamily. Monomer in the absence of bound KITLG/SCF. Homodimer in the presence of bound KITLG/SCF, forming a heterotetramer with two KITLG/SCF molecules. Interacts (via phosphorylated tyrosine residues) with the adapter proteins GRB2 and GRB7 (via SH2 domain), and SH2B2/APS. Interacts (via C-terminus) with MPDZ (via the tenth PDZ domain). Interacts (via phosphorylated tyrosine residues) with PIK3R1 and PIK3 catalytic subunit. Interacts (via phosphorylated tyrosine) with CRK (isoform Crk-II), FYN, SHC1 and MATK/CHK (via SH2 domain). Interacts with LYN and FES/FPS. Interacts (via phosphorylated tyrosine residues) with the protein phosphatases PTPN6/SHP-1 (via SH2 domain), PTPN11/SHP-2 (via SH2 domain) and PTPRU. Interacts with PLCG1. Interacts with DOK1 and TEC. Interacts (KITLG/SCF-bound) with IL1RL1. Interacts with IL1RAP (independent of stimulation with KITLG/SCF). A mast cell-specific KITLG/SCF-induced interleukin-33 signaling complex contains IL1RL1, IL1RAP, KIT and MYD88. In terms of processing, ubiquitinated by SOCS6. KIT is rapidly ubiquitinated after autophosphorylation induced by KITLG/SCF binding, leading to internalization and degradation. Post-translationally, autophosphorylated on tyrosine residues. KITLG/SCF binding enhances autophosphorylation. Isoform 1 shows low levels of tyrosine phosphorylation in the absence of added KITLG/SCF (in vitro). Kinase activity is down-regulated by phosphorylation on serine residues by protein kinase C family members. Phosphorylation at Tyr-568 is required for interaction with PTPN11/SHP-2, CRK (isoform Crk-II) and members of the SRC tyrosine-protein kinase family. Phosphorylation at Tyr-570 is required for interaction with PTPN6/SHP-1. Phosphorylation at Tyr-703, Tyr-823 and Tyr-936 is important for interaction with GRB2. Phosphorylation at Tyr-721 is important for interaction with PIK3R1. Phosphorylation at Tyr-823 and Tyr-936 is important for interaction with GRB7. As to expression, in testis, detected in spermatogonia in the basal layer and in interstitial Leydig cells but not in Sertoli cells or spermatocytes inside the seminiferous tubules (at protein level). Expression is maintained in ejaculated spermatozoa (at protein level).

The protein resides in the cell membrane. Its subcellular location is the cytoplasm. It carries out the reaction L-tyrosyl-[protein] + ATP = O-phospho-L-tyrosyl-[protein] + ADP + H(+). Present in an inactive conformation in the absence of bound ligand. KITLG/SCF binding leads to dimerization and activation by autophosphorylation on tyrosine residues. Activity is down-regulated by PRKCA-mediated phosphorylation on serine residues. Inhibited by imatinib/STI-571 (Gleevec) and sunitinib; these compounds maintain the kinase in an inactive conformation. Its function is as follows. Tyrosine-protein kinase that acts as a cell-surface receptor for the cytokine KITLG/SCF and plays an essential role in the regulation of cell survival and proliferation, hematopoiesis, stem cell maintenance, gametogenesis, mast cell development, migration and function, and in melanogenesis. In response to KITLG/SCF binding, KIT can activate several signaling pathways. Phosphorylates PIK3R1, PLCG1, SH2B2/APS and CBL. Activates the AKT1 signaling pathway by phosphorylation of PIK3R1, the regulatory subunit of phosphatidylinositol 3-kinase. Activated KIT also transmits signals via GRB2 and activation of RAS, RAF1 and the MAP kinases MAPK1/ERK2 and/or MAPK3/ERK1. Promotes activation of STAT family members STAT1, STAT3, STAT5A and STAT5B. Activation of PLCG1 leads to the production of the cellular signaling molecules diacylglycerol and inositol 1,4,5-trisphosphate. KIT signaling is modulated by protein phosphatases, and by rapid internalization and degradation of the receptor. Activated KIT promotes phosphorylation of the protein phosphatases PTPN6/SHP-1 and PTPRU, and of the transcription factors STAT1, STAT3, STAT5A and STAT5B. Promotes phosphorylation of PIK3R1, CBL, CRK (isoform Crk-II), LYN, MAPK1/ERK2 and/or MAPK3/ERK1, PLCG1, SRC and SHC1. In Homo sapiens (Human), this protein is Mast/stem cell growth factor receptor Kit (KIT).